We begin with the raw amino-acid sequence, 302 residues long: MALRLDGKQLAAELEQRLQAEIAAGLVQAGRPPGLAVVRIGDDPASGVYVANKQKACGRIGMASYLSHLPAKVPAAEVLATIQSLNLDERVDGILLQLPLPKGLDEGPLLAAIDPEKDADGLHTLNLGRLLKGEPGPRSCTPGGVMALLARHQIPLAGKRAVVIGRSILVGQPMALMLQAANATVSVAHSHTDDLASLTQQADVLVVAAGRARMIGSEHVKPGAVVVDVGIHRLPADPELGPQVKARLCGDVRAQEVEPLASALTPVPGGVGPMTVTMLLVNTVARWQQHCGLPFGLRDLLV.

NADP(+) contacts are provided by residues 165–167 (GRS), S190, and I231.

The protein belongs to the tetrahydrofolate dehydrogenase/cyclohydrolase family. Homodimer.

It catalyses the reaction (6R)-5,10-methylene-5,6,7,8-tetrahydrofolate + NADP(+) = (6R)-5,10-methenyltetrahydrofolate + NADPH. The catalysed reaction is (6R)-5,10-methenyltetrahydrofolate + H2O = (6R)-10-formyltetrahydrofolate + H(+). Its pathway is one-carbon metabolism; tetrahydrofolate interconversion. Its function is as follows. Catalyzes the oxidation of 5,10-methylenetetrahydrofolate to 5,10-methenyltetrahydrofolate and then the hydrolysis of 5,10-methenyltetrahydrofolate to 10-formyltetrahydrofolate. The sequence is that of Bifunctional protein FolD from Prochlorococcus marinus (strain MIT 9303).